The following is a 94-amino-acid chain: Conotoxin Gla-MrII (94 aa).

The signal sequence occupies residues 1 to 25 (MFGHTSVSFLLLSIVALGMVATVIC). 5 positions are modified to 4-carboxyglutamate: Glu30, Glu34, Glu37, Glu40, and Glu41. Residues 78-94 (STHMQKRFLRMPRDLAD) constitute a propeptide that is removed on maturation.

This sequence belongs to the conotoxin I2 superfamily. In terms of processing, contains 4 disulfide bonds. Expressed by the venom duct.

The protein localises to the secreted. The protein is Conotoxin Gla-MrII of Conus marmoreus (Marble cone).